Reading from the N-terminus, the 437-residue chain is MPIITQILARQILDSRGNPTVEVDVYTESSFGRAAVPSGASTGVHEAVELRDGDAAVYLGKGVLKAVENVNTVINDALTGMLVTEQEEIDQALLDLDGTPNKSKLGANALLGVSMACAKAGAEYSGLPLYRYIGGTMASTLPVPMMNVLNGGAHADNTVDFQEFMIMPAGFDTFSDALRCGAEIFHALKALLKSKGLSTAVGDEGGFAPNLSSNEEAIELVIEAIGKAGYKVGSPTDKGGLGDAQVMIALDPASSEFYDSAKKRYVFKKSSKRELTSLEMAEYWEKWASDYPIISIEDGMAEDDWEGWKVLTEKIGSRVQLVGDDLFVTNSKRLAEGIERGVANSILVKVNQIGTLTETLDAIDLAKRNGYTSVISHRSGETEDSTIAQIAVATNAGQIKTGSLSRSDRMAKYNELLRIEEELGDQARYPGRKAFRV.

Q162 lines the (2R)-2-phosphoglycerate pocket. The active-site Proton donor is the E204. Positions 251, 297, and 324 each coordinate Mg(2+). Residues K349, R378, S379, and K400 each contribute to the (2R)-2-phosphoglycerate site. K349 serves as the catalytic Proton acceptor.

This sequence belongs to the enolase family. Requires Mg(2+) as cofactor.

It is found in the cytoplasm. It localises to the secreted. The protein localises to the cell surface. It carries out the reaction (2R)-2-phosphoglycerate = phosphoenolpyruvate + H2O. Its pathway is carbohydrate degradation; glycolysis; pyruvate from D-glyceraldehyde 3-phosphate: step 4/5. Catalyzes the reversible conversion of 2-phosphoglycerate (2-PG) into phosphoenolpyruvate (PEP). It is essential for the degradation of carbohydrates via glycolysis. The protein is Enolase of Pelodictyon phaeoclathratiforme (strain DSM 5477 / BU-1).